The sequence spans 149 residues: D-aminoacyl-tRNA deacylase (149 aa).

A Gly-cisPro motif, important for rejection of L-amino acids motif is present at residues Gly137 to Pro138.

Belongs to the DTD family. As to quaternary structure, homodimer.

It is found in the cytoplasm. It carries out the reaction glycyl-tRNA(Ala) + H2O = tRNA(Ala) + glycine + H(+). The catalysed reaction is a D-aminoacyl-tRNA + H2O = a tRNA + a D-alpha-amino acid + H(+). An aminoacyl-tRNA editing enzyme that deacylates mischarged D-aminoacyl-tRNAs. Also deacylates mischarged glycyl-tRNA(Ala), protecting cells against glycine mischarging by AlaRS. Acts via tRNA-based rather than protein-based catalysis; rejects L-amino acids rather than detecting D-amino acids in the active site. By recycling D-aminoacyl-tRNA to D-amino acids and free tRNA molecules, this enzyme counteracts the toxicity associated with the formation of D-aminoacyl-tRNA entities in vivo and helps enforce protein L-homochirality. This chain is D-aminoacyl-tRNA deacylase, found in Clostridium perfringens (strain ATCC 13124 / DSM 756 / JCM 1290 / NCIMB 6125 / NCTC 8237 / Type A).